Reading from the N-terminus, the 517-residue chain is 2-isopropylmalate synthase (517 aa).

A Pyruvate carboxyltransferase domain is found at 5-268; it reads IIIFDTTLRD…DTRINTQEIH (264 aa). Mn(2+) is bound by residues Asp14, His202, His204, and Asn238. The tract at residues 393–517 is regulatory domain; the sequence is SLDVITSQTI…ADLKSHKISQ (125 aa).

The protein belongs to the alpha-IPM synthase/homocitrate synthase family. LeuA type 1 subfamily. Homodimer. It depends on Mn(2+) as a cofactor.

Its subcellular location is the cytoplasm. It carries out the reaction 3-methyl-2-oxobutanoate + acetyl-CoA + H2O = (2S)-2-isopropylmalate + CoA + H(+). Its pathway is amino-acid biosynthesis; L-leucine biosynthesis; L-leucine from 3-methyl-2-oxobutanoate: step 1/4. Functionally, catalyzes the condensation of the acetyl group of acetyl-CoA with 3-methyl-2-oxobutanoate (2-ketoisovalerate) to form 3-carboxy-3-hydroxy-4-methylpentanoate (2-isopropylmalate). The sequence is that of 2-isopropylmalate synthase from Histophilus somni (strain 2336) (Haemophilus somnus).